Reading from the N-terminus, the 152-residue chain is Xanthine-guanine phosphoribosyltransferase (152 aa).

Residues 37-38, Arg69, and 88-96 each bind 5-phospho-alpha-D-ribose 1-diphosphate; these read RG and DDLVDTGGT. Arg69 is a binding site for GMP. Position 89 (Asp89) interacts with Mg(2+). The guanine site is built by Asp92 and Ile135. Xanthine is bound by residues Asp92 and Ile135. GMP-binding positions include 92 to 96 and 134 to 135; these read DTGGT and WI.

It belongs to the purine/pyrimidine phosphoribosyltransferase family. XGPT subfamily. Homotetramer. The cofactor is Mg(2+).

It is found in the cell inner membrane. It catalyses the reaction GMP + diphosphate = guanine + 5-phospho-alpha-D-ribose 1-diphosphate. The enzyme catalyses XMP + diphosphate = xanthine + 5-phospho-alpha-D-ribose 1-diphosphate. It carries out the reaction IMP + diphosphate = hypoxanthine + 5-phospho-alpha-D-ribose 1-diphosphate. Its pathway is purine metabolism; GMP biosynthesis via salvage pathway; GMP from guanine: step 1/1. It functions in the pathway purine metabolism; XMP biosynthesis via salvage pathway; XMP from xanthine: step 1/1. In terms of biological role, purine salvage pathway enzyme that catalyzes the transfer of the ribosyl-5-phosphate group from 5-phospho-alpha-D-ribose 1-diphosphate (PRPP) to the N9 position of the 6-oxopurines guanine and xanthine to form the corresponding ribonucleotides GMP (guanosine 5'-monophosphate) and XMP (xanthosine 5'-monophosphate), with the release of PPi. To a lesser extent, also acts on hypoxanthine. The polypeptide is Xanthine-guanine phosphoribosyltransferase (Yersinia pseudotuberculosis serotype O:1b (strain IP 31758)).